The primary structure comprises 782 residues: Zinc finger protein 786 (782 aa).

A KRAB domain is found at 9–80 (LTFEDVAIYF…WRESQKSGNI (72 aa)). Residues 141-164 (PQRHDARAPPPLACGPSESTLKEG) form a disordered region. Residues 192 to 209 (CGESCWENNHLVMHQRGH) form a C2H2-type 1; degenerate zinc finger. The C2H2-type 2 zinc-finger motif lies at 240-262 (FRCGVCGKSFRRKLCLLRHLAAH). The interval 285-364 (SHRLPQQGEK…EGDTEALQHG (80 aa)) is disordered. Residues 369-391 (CSCSECGERSPMSARLASPCRAH) form a C2H2-type 3; degenerate zinc finger. 3 consecutive C2H2-type zinc fingers follow at residues 397-419 (FQCA…QHAH), 425-447 (FSCR…IRVH), and 453-475 (FRCA…QRLH). The segment at 481-503 (FQCPECGLSFRLESMLRAHRLRH) adopts a C2H2-type 7; degenerate zinc-finger fold. 9 consecutive C2H2-type zinc fingers follow at residues 509-531 (FSCS…LRVH), 537-559 (FQCL…QHTH), 565-587 (FSCG…LRVH), 593-615 (FQCP…QRLH), 621-643 (FQCP…QLLH), 649-670 (FSCE…IRTH), 676-698 (FQCP…QGLH), 704-726 (FHCP…QRIH), and 732-754 (FACG…IRVH).

Belongs to the krueppel C2H2-type zinc-finger protein family.

It is found in the nucleus. Its function is as follows. May be involved in transcriptional regulation. This is Zinc finger protein 786 (ZNF786) from Homo sapiens (Human).